Here is a 132-residue protein sequence, read N- to C-terminus: Small ribosomal subunit protein uS8c (132 aa).

It belongs to the universal ribosomal protein uS8 family. As to quaternary structure, part of the 30S ribosomal subunit.

The protein localises to the plastid. Its subcellular location is the chloroplast. Functionally, one of the primary rRNA binding proteins, it binds directly to 16S rRNA central domain where it helps coordinate assembly of the platform of the 30S subunit. This is Small ribosomal subunit protein uS8c (rps8) from Chaetosphaeridium globosum (Charophycean green alga).